A 1219-amino-acid chain; its full sequence is DNA ligase 4 (1219 aa).

Residues E251, K253, R258, R273, E303, F342, E418, K423, R434, K440, and K442 each contribute to the ATP site. The active-site N6-AMP-lysine intermediate is K253. E303 is a binding site for Mg(2+). A Mg(2+)-binding site is contributed by E418. The segment at N604–K632 is disordered. BRCT domains lie at G651 to F739 and V807 to L909. Disordered stretches follow at residues M914 to K1126 and I1146 to V1197. Residues V932 to R960 show a composition bias toward polar residues. Positions Q1042–A1051 are enriched in basic residues. The span at D1056–D1065 shows a compositional bias: acidic residues. Composition is skewed to basic and acidic residues over residues V1084–K1096 and R1117–K1126. Positions S1148–T1159 are enriched in polar residues.

Belongs to the ATP-dependent DNA ligase family. As to quaternary structure, interacts with XRCC4 via its tandem BRCT domains. Interacts with POLL. Mg(2+) is required as a cofactor. As to expression, widely expressed, with higher levels in young flowers and roots.

The protein resides in the nucleus. The enzyme catalyses ATP + (deoxyribonucleotide)n-3'-hydroxyl + 5'-phospho-(deoxyribonucleotide)m = (deoxyribonucleotide)n+m + AMP + diphosphate.. Its function is as follows. DNA ligase involved in DNA non-homologous end joining (NHEJ); required for double-strand break (DSB) repair. May be involved for T-DNA integration even if not absolutely required. Seems to be dispensable under normal growth conditions. This chain is DNA ligase 4 (LIG4), found in Arabidopsis thaliana (Mouse-ear cress).